Consider the following 422-residue polypeptide: Lipase member M (422 aa).

A signal peptide spans 1–33 (MSEILSRVWTVSHRVEIWLLILVAYLLQRNVNS). Residue asparagine 48 is glycosylated (N-linked (GlcNAc...) asparagine). Positions 92 to 392 (PVVLLQHGLL…EWAHVDFIWG (301 aa)) constitute an AB hydrolase-1 domain. Serine 186 (nucleophile) is an active-site residue. Residues cysteine 260 and cysteine 269 are joined by a disulfide bond. Residues aspartate 357 and histidine 386 each act as charge relay system in the active site.

This sequence belongs to the AB hydrolase superfamily. Lipase family.

It localises to the secreted. Functionally, plays a highly specific role in the last step of keratinocyte differentiation. May have an essential function in lipid metabolism of the most differentiated epidermal layers. The polypeptide is Lipase member M (Lipm) (Mus musculus (Mouse)).